We begin with the raw amino-acid sequence, 212 residues long: 3-demethoxyubiquinol 3-hydroxylase (212 aa).

Positions 61, 91, 94, 143, 175, and 178 each coordinate Fe cation.

Belongs to the COQ7 family. The cofactor is Fe cation.

It localises to the cell membrane. It catalyses the reaction a 5-methoxy-2-methyl-3-(all-trans-polyprenyl)benzene-1,4-diol + AH2 + O2 = a 3-demethylubiquinol + A + H2O. It participates in cofactor biosynthesis; ubiquinone biosynthesis. Functionally, catalyzes the hydroxylation of 2-nonaprenyl-3-methyl-6-methoxy-1,4-benzoquinol during ubiquinone biosynthesis. This chain is 3-demethoxyubiquinol 3-hydroxylase, found in Methylibium petroleiphilum (strain ATCC BAA-1232 / LMG 22953 / PM1).